The sequence spans 170 residues: Peptide deformylase (170 aa).

Fe cation contacts are provided by C94 and H136. E137 is a catalytic residue. H140 contributes to the Fe cation binding site.

The protein belongs to the polypeptide deformylase family. Requires Fe(2+) as cofactor.

It carries out the reaction N-terminal N-formyl-L-methionyl-[peptide] + H2O = N-terminal L-methionyl-[peptide] + formate. Removes the formyl group from the N-terminal Met of newly synthesized proteins. Requires at least a dipeptide for an efficient rate of reaction. N-terminal L-methionine is a prerequisite for activity but the enzyme has broad specificity at other positions. This is Peptide deformylase from Xylella fastidiosa (strain M12).